The sequence spans 141 residues: HTH-type transcriptional repressor NsrR (141 aa).

The region spanning 2-129 (QLTSFTDYGL…DNYTLADMVK (128 aa)) is the HTH rrf2-type domain. The H-T-H motif DNA-binding region spans 28-51 (ISQVTEVYGVSRNHMVKIINQLSR). Positions 91, 96, and 102 each coordinate [2Fe-2S] cluster.

[2Fe-2S] cluster serves as cofactor.

In terms of biological role, nitric oxide-sensitive repressor of genes involved in protecting the cell against nitrosative stress. May require iron for activity. The chain is HTH-type transcriptional repressor NsrR from Yersinia pseudotuberculosis serotype O:1b (strain IP 31758).